Here is a 507-residue protein sequence, read N- to C-terminus: Glycerol kinase (507 aa).

Residue Thr15 coordinates ADP. Positions 15, 16, and 17 each coordinate ATP. Thr15 provides a ligand contact to sn-glycerol 3-phosphate. ADP is bound at residue Arg19. 4 residues coordinate sn-glycerol 3-phosphate: Arg85, Glu86, Tyr137, and Asp250. The glycerol site is built by Arg85, Glu86, Tyr137, Asp250, and Gln251. ADP contacts are provided by Thr272 and Gly316. 4 residues coordinate ATP: Thr272, Gly316, Gln320, and Gly417. Gly417 is a binding site for ADP.

The protein belongs to the FGGY kinase family.

It catalyses the reaction glycerol + ATP = sn-glycerol 3-phosphate + ADP + H(+). The protein operates within polyol metabolism; glycerol degradation via glycerol kinase pathway; sn-glycerol 3-phosphate from glycerol: step 1/1. With respect to regulation, inhibited by fructose 1,6-bisphosphate (FBP). In terms of biological role, key enzyme in the regulation of glycerol uptake and metabolism. Catalyzes the phosphorylation of glycerol to yield sn-glycerol 3-phosphate. This is Glycerol kinase from Mycoplasmopsis pulmonis (strain UAB CTIP) (Mycoplasma pulmonis).